The following is a 60-amino-acid chain: Metallothionein B (60 aa).

Residues 1–28 (MDPCECTKSGTCNCGGSCTCTNCSCTSC) form a beta region. 20 residues coordinate a divalent metal cation: Cys-4, Cys-6, Cys-12, Cys-14, Cys-18, Cys-20, Cys-23, Cys-25, Cys-28, Cys-32, Cys-33, Cys-35, Cys-36, Cys-40, Cys-43, Cys-47, Cys-49, Cys-54, Cys-58, and Cys-59. Positions 29–60 (KKSCCPCCPSGCTKCASGCVCKGKTCDTSCCQ) are alpha.

Belongs to the metallothionein superfamily. Type 1 family.

Metallothioneins have a high content of cysteine residues that bind various heavy metals. The polypeptide is Metallothionein B (mtb) (Chaenocephalus aceratus (Blackfin icefish)).